The chain runs to 585 residues: Pre-mRNA-splicing factor sap145 (585 aa).

A coiled-coil region spans residues 1 to 74 (MAEIQTAQNP…NNDNLYNDKK (74 aa)). The disordered stretch occupies residues 1–84 (MAEIQTAQNP…SNGNFYDTNK (84 aa)). Residues 12-22 (KELEKILERNN) show a composition bias toward basic and acidic residues. Residues 23–41 (KQKNKKSRNQVRREKKKLL) show a composition bias toward basic residues. Over residues 51–62 (LAEKNSDDKDQL) the composition is skewed to basic and acidic residues. Ser145 carries the post-translational modification Phosphoserine. The tract at residues 400–460 (IHAGTGSPVS…SASEPRSQRE (61 aa)) is disordered. Positions 416 to 439 (LEEFEEEESSEEEESEDVEYPTEE) are enriched in acidic residues.

In terms of assembly, belongs to the 40S cdc5-associated complex (or cwf complex), a spliceosome sub-complex reminiscent of a late-stage spliceosome composed of the U2, U5 and U6 snRNAs and at least brr2, cdc5, cwf2/prp3, cwf3/syf1, cwf4/syf3, cwf5/ecm2, spp42/cwf6, cwf7/spf27, cwf8, cwf9, cwf10, cwf11, cwf12, prp45/cwf13, cwf14, cwf15, cwf16, cwf17, cwf18, cwf19, cwf20, cwf21, cwf22, cwf23, cwf24, cwf25, cwf26, cyp7/cwf27, cwf28, cwf29/ist3, lea1, msl1, prp5/cwf1, prp10/sap155, prp12/sap130, prp17, prp22, sap61, sap62, sap114, sap145, slu7, smb1, smd1, smd3, smf1, smg1 and syf2. Sap145 is part of the SF3b subcomplex of the Prp19-associated nineteen complex (NTC), composed of ini1, prp10, prp12/sap130, sap10/sap155, sap14, sap49 and sap145. Part of the U2 snRNP.

The protein resides in the nucleus. The protein localises to the cytoplasm. Functionally, involved in pre-mRNA splicing. May be involved in endoplasmic reticulum-associated protein degradation (ERAD) and required for growth at low and high temperatures. In Schizosaccharomyces pombe (strain 972 / ATCC 24843) (Fission yeast), this protein is Pre-mRNA-splicing factor sap145 (sap145).